The primary structure comprises 425 residues: UPF0229 protein SG1344 (425 aa).

Residues 49-109 (GESVSIPNTD…GQGSVSQDGE (61 aa)) are disordered. Residues 50–59 (ESVSIPNTDI) show a composition bias toward polar residues. Over residues 77 to 90 (PGNDHFVQNDRIER) the composition is skewed to basic and acidic residues.

The protein belongs to the UPF0229 family.

The sequence is that of UPF0229 protein SG1344 from Sodalis glossinidius (strain morsitans).